The following is an 83-amino-acid chain: Small ribosomal subunit protein eS21 (83 aa).

It belongs to the eukaryotic ribosomal protein eS21 family. As to quaternary structure, component of the 40S small ribosomal subunit. Interacts with sta.

The protein localises to the cytoplasm. It localises to the cytosol. The protein resides in the rough endoplasmic reticulum. In terms of biological role, may be an associated component of the ribosome rather than a core structural subunit. May act as a translation initiation factor. Has a role in regulation of cell proliferation in the hematopoietic organs and the imaginal disks of larva. The polypeptide is Small ribosomal subunit protein eS21 (RpS21) (Drosophila ananassae (Fruit fly)).